The chain runs to 603 residues: Elongation factor 4 (603 aa).

The tr-type G domain occupies 2-184 (NHIRNFSIIA…AIVHKMPAPR (183 aa)). GTP is bound by residues 14–19 (DHGKST) and 131–134 (NKMD).

This sequence belongs to the TRAFAC class translation factor GTPase superfamily. Classic translation factor GTPase family. LepA subfamily.

Its subcellular location is the cell inner membrane. It carries out the reaction GTP + H2O = GDP + phosphate + H(+). Its function is as follows. Required for accurate and efficient protein synthesis under certain stress conditions. May act as a fidelity factor of the translation reaction, by catalyzing a one-codon backward translocation of tRNAs on improperly translocated ribosomes. Back-translocation proceeds from a post-translocation (POST) complex to a pre-translocation (PRE) complex, thus giving elongation factor G a second chance to translocate the tRNAs correctly. Binds to ribosomes in a GTP-dependent manner. In Variovorax paradoxus (strain S110), this protein is Elongation factor 4.